A 204-amino-acid polypeptide reads, in one-letter code: Imidazoleglycerol-phosphate dehydratase (204 aa).

The interval 183-204 (DPRMDGITPSTKGTLSESGDSQ) is disordered. Residues 190 to 204 (TPSTKGTLSESGDSQ) are compositionally biased toward polar residues.

This sequence belongs to the imidazoleglycerol-phosphate dehydratase family.

Its subcellular location is the cytoplasm. The enzyme catalyses D-erythro-1-(imidazol-4-yl)glycerol 3-phosphate = 3-(imidazol-4-yl)-2-oxopropyl phosphate + H2O. It participates in amino-acid biosynthesis; L-histidine biosynthesis; L-histidine from 5-phospho-alpha-D-ribose 1-diphosphate: step 6/9. The polypeptide is Imidazoleglycerol-phosphate dehydratase (Alcanivorax borkumensis (strain ATCC 700651 / DSM 11573 / NCIMB 13689 / SK2)).